Consider the following 413-residue polypeptide: Monacolin J acid methylbutanoyltransferase (413 aa).

Arg-73 is a monacolin J binding site. The active-site Acyl-ester intermediate is Ser-76. Arg-173, Tyr-188, and Tyr-258 together coordinate monacolin J. Gly-366 contacts 2-methylbutanoate. The monacolin J site is built by Glu-388 and Trp-390.

It belongs to the class-A beta-lactamase family. As to quaternary structure, interacts with LovF.

It catalyses the reaction monacolin J carboxylate + (S)-2-methylbutanoyl-[2-methylbutanoate polyketide synthase] = lovastatin carboxylate + holo-[2-methylbutanoate polyketide synthase]. It functions in the pathway polyketide biosynthesis; lovastatin biosynthesis. In terms of biological role, monacolin J acid methylbutanoyltransferase; part of the gene cluster that mediates the biosynthesis of lovastatin (also known as mevinolin, mevacor or monacolin K), a hypolipidemic inhibitor of (3S)-hydroxymethylglutaryl-coenzyme A (HMG-CoA) reductase (HMGR). The first step in the biosynthesis of lovastatin is the production of dihydromonacolin L acid by the lovastatin nonaketide synthase lovB and the trans-acting enoyl reductase lovC via condensation of one acetyl-CoA unit and 8 malonyl-CoA units. Dihydromonacolin L acid is released from lovB by the thioesterase lovG. Next, dihydromonacolin L acid is oxidized by the dihydromonacolin L monooxygenase lovA twice to form monacolin J acid. The 2-methylbutyrate moiety of lovastatin is synthesized by the lovastatin diketide synthase lovF via condensation of one acetyl-CoA unit and one malonyl-CoA unit. Finally, the covalent attachment of this moiety to monacolin J acid is catalyzed by the transesterase lovD to yield lovastatin. LovD has broad substrate specificity and can also convert monacolin J to simvastatin using alpha-dimethylbutanoyl-S-methyl-3-mercaptopropionate (DMB-S-MMP) as the thioester acyl donor, and can also catalyze the reverse reaction and function as hydrolase in vitro. LovD has much higher activity with LovF-bound 2-methylbutanoate than with free diketide substrates. This Aspergillus terreus (strain NIH 2624 / FGSC A1156) protein is Monacolin J acid methylbutanoyltransferase.